We begin with the raw amino-acid sequence, 655 residues long: Polycyclic ketone monooxygenase (655 aa).

FAD-binding residues include Gly-89, Asp-113, Ala-114, Thr-121, Trp-124, Cys-132, Asp-133, Tyr-139, and Val-183. Residues Thr-277, Thr-280, Thr-301, Lys-425, and Val-452 each contribute to the NADPH site. An intrachain disulfide couples Cys-424 to Cys-596. Residues Thr-492 and Asn-541 each coordinate FAD. Tyr-600 provides a ligand contact to NADPH.

The protein belongs to the FAD-binding monooxygenase family. It depends on FAD as a cofactor.

Its function is as follows. Polycyclic ketone monooxygenase (PockeMO) that displays excellent enantioselectivity, acts on various ketones, and is particularly active on polycyclic molecules. Breaks C-C bonds through the insertion of a single oxygen atom adjacent to a carbonyl moiety, yielding esters or lactones from ketones. PockeMO is able to convert linear ketones (including cyclohexane and to a lesser extend 4-octanone), cyclic ketones (including cyclohexanone and cyclooctanone), bicyclic ketones and polycyclic ketones (steroids). Performs oxidation of the keto functionalities at both the A and D rings of steroids. Particularly, oxidizes the A ring of stanolone or pregnenolone. Selectively oxidizes the D ring of androstenedione or androstadienedione, steroids with keto groups in both the A and D rings, to yield the pharmaceutically relevant testo(lo)lactone. This is Polycyclic ketone monooxygenase from Thermothelomyces thermophilus (strain ATCC 42464 / BCRC 31852 / DSM 1799) (Sporotrichum thermophile).